We begin with the raw amino-acid sequence, 491 residues long: UDP-N-acetylmuramate--L-alanine ligase (491 aa).

126–132 (GTHGKTT) provides a ligand contact to ATP.

It belongs to the MurCDEF family.

It localises to the cytoplasm. It catalyses the reaction UDP-N-acetyl-alpha-D-muramate + L-alanine + ATP = UDP-N-acetyl-alpha-D-muramoyl-L-alanine + ADP + phosphate + H(+). The protein operates within cell wall biogenesis; peptidoglycan biosynthesis. Cell wall formation. This Photorhabdus laumondii subsp. laumondii (strain DSM 15139 / CIP 105565 / TT01) (Photorhabdus luminescens subsp. laumondii) protein is UDP-N-acetylmuramate--L-alanine ligase.